Here is a 1032-residue protein sequence, read N- to C-terminus: Toll-like receptor 9 (1032 aa).

An N-terminal signal peptide occupies residues 1–25; it reads MGPCRGALHPLSLLVQAAALALALA. Topologically, residues 26-815 are extracellular; the sequence is QGTLPAFLPC…QDLRLCLDEA (790 aa). A disulfide bridge links C35 with C45. 47 to 51 is a DNA binding site; that stretch reads WLFLK. LRR repeat units lie at residues 62–85, 87–110, 122–147, 150–166, 167–190, 198–221, 223–242, 243–268, 283–306, 308–332, 333–356, 363–386, 390–413, 415–440, 472–496, 498–521, 522–545, 547–574, 576–600, 602–624, 629–652, 654–677, 678–701, 703–725, 726–749, and 751–774; these read RGNVTSLSLYSNRIHHLHDYDFVH, VHLRRLNLKWNCPPASLSPMHFPC, VPTLEDLNLSYNSITTVPALPSSLVS, LSRTNILVLDPATLAGL, YALRFLFLDGNCYYKNPCQQALQV, LGNLTHLSLKYNNLTVVPRGLPPS, EYLLLSYNHIITLAPEDLAN, LTALRVLDVGGNCRRCDHARNPCREC, LSHLEGLVLRDSSLYSLDPRWFHG, GNLMVLDLSENFLYDCITKTKAFYG, LARLRRLNLSFNYHKKVSFAHLHL, LLSLQELDIHGIFFRSLSKTTLQS, LPMLQRLHLQLNFISQAQLSIFGA, PGLRYVDLSDNRISGAAEPAAATGEV, CRTLNFTLDLSRNNLVTVQPEMFVR, ARLQCLGLSHNSISQAVNGSQFVP, LSNLRVLDLSHNKLDLYHGRSFTE, PRLEALDLSYNSQPFSMRGVGHNLSFVA, LPALRYLSLAHNGIHSRVSQQLRSA, LRALDFSGNTLSQMWAEGDLYLR, LRSLVQLDLSQNRLHTLLPRNLDN, PKSLRLLRLRDNYLAFFNWSSLAL, LPKLEALDLAGNQLKALSNGSLPN, TQLQRLDLSGNSIGFVVPSFFAL, AVRLRELNLSANALKTVEPSWFGS, and AGALKVLDVTANPLHCACGATFVD. A glycan (N-linked (GlcNAc...) asparagine) is linked at N64. Residues 72–77 and 95–109 contribute to the DNA site; these read SNRIHH and KWNCPPASLSPMHFP. C98 and C110 are oxidised to a cystine. The N-linked (GlcNAc...) asparagine glycan is linked to N129. DNA is bound by residues Y132, R152, and 179 to 181; that span reads YYK. C178 and C184 are oxidised to a cystine. The N-linked (GlcNAc...) asparagine glycan is linked to N200. Residue Y208 participates in DNA binding. Residues N210 and N242 are each glycosylated (N-linked (GlcNAc...) asparagine). 2 disulfide bridges follow: C255-C268 and C258-C265. C258 is lipidated: S-palmitoyl cysteine. DNA is bound at residue R262. C265 is lipidated: S-palmitoyl cysteine. N-linked (GlcNAc...) asparagine glycosylation is present at N340. A disulfide bond links C472 and C502. N476 and N515 each carry an N-linked (GlcNAc...) asparagine glycan. N-linked (GlcNAc...) asparagine glycosylation occurs at N569. N-linked (GlcNAc...) asparagine glycosylation is found at N671, N696, and N701. N733 carries an N-linked (GlcNAc...) asparagine glycan. 2 disulfide bridges follow: C766-C792 and C768-C811. A helical transmembrane segment spans residues 816-836; the sequence is LSWVCFSLSLLAVALSLAVPM. The Cytoplasmic segment spans residues 837-1032; the sequence is LHQLCGWDLW…QNFCRGPTTA (196 aa). Residues 868 to 1013 enclose the TIR domain; the sequence is LAYDAFVVFD…SFWAQLGTAL (146 aa).

The protein belongs to the Toll-like receptor family. In terms of assembly, monomer and homodimer. Exists as a monomer in the absence of unmethylated cytidine-phosphate-guanosine (CpG) ligand. Proteolytic processing of an insertion loop (Z-loop) is required for homodimerization upon binding to the unmethylated CpG ligand leading to its activation. Interacts with MYD88 via their respective TIR domains. Interacts with BTK. Interacts (via transmembrane domain) with UNC93B1. Interacts with CD300LH; the interaction may promote full activation of TLR9-triggered innate responses. Interacts with CNPY3 and HSP90B1; this interaction is required for proper folding in the endoplasmic reticulum. Interacts with SMPDL3B. Interacts with CD82; this interaction is essential for TLR9-dependent myddosome formation in response to CpG stimulation. Activated by proteolytic cleavage of the flexible loop between repeats LRR14 and LRR15 within the ectodomain. Cleavage requires UNC93B1. Proteolytically processed by first removing the majority of the ectodomain by either asparagine endopeptidase (AEP) or a cathepsin followed by a trimming event that is solely cathepsin mediated and required for optimal receptor signaling. Post-translationally, palmitoylated by ZDHHC3 in the Golgi regulates TLR9 trafficking from the Golgi to endosomes. Depalmitoylation by PPT1 controls the release of TLR9 from UNC93B1 in endosomes.

It localises to the endoplasmic reticulum membrane. The protein resides in the endosome. The protein localises to the lysosome. It is found in the cytoplasmic vesicle. Its subcellular location is the phagosome. Functionally, key component of innate and adaptive immunity. TLRs (Toll-like receptors) control host immune response against pathogens through recognition of molecular patterns specific to microorganisms. TLR9 is a nucleotide-sensing TLR which is activated by unmethylated cytidine-phosphate-guanosine (CpG) dinucleotides. Acts via MYD88 and TRAF6, leading to NF-kappa-B activation, cytokine secretion and the inflammatory response. Upon CpG stimulation, induces B-cell proliferation, activation, survival and antibody production. The protein is Toll-like receptor 9 (TLR9) of Canis lupus familiaris (Dog).